A 471-amino-acid polypeptide reads, in one-letter code: MRPQVVGAILRSRAVVSRQPLSRTHIFAAVTVAKSSSPAQNSRRTFSSSFRRLYEPKAEITAEGLELSPPQAVTGGKRTVLPNFWLRDNCRCTKCVNQDTLQRNFNTFAIPSDIHPTKVEATKENVTVQWSDNHTSTYPWPFLSFYLTSNARGHENDQISLWGSEAGSRPPTVSFPRVMASDQGVADLTAMIKEFGFCFVKDTPHDDPDVTRQLLERIAFIRVTHYGGFYDFTPDLAMADTAYTNLALPAHTDTTYFTDPAGLQAFHLLEHKAAPSRPPPPPPPPPPPSEEKEAAGSAAGEAAAAAEGGKSLLVDGFNAARILKEEDPRAYEILSSVRLPWHASGNEGITIAPDKLYPVLELNEDTGELHRVRWNNDDRGVVPFGEKYSPSEWYEAARKWDGILRRKSSELWVQLEPGKPLIFDNWRVLHGRSAFSGIRRICGGYINRDDFISRWRNTNYPRSEVLPRVTG.

The Fe cation site is built by histidine 251 and aspartate 253. The segment at 272–302 is disordered; that stretch reads KAAPSRPPPPPPPPPPPSEEKEAAGSAAGEA. Residues 276–288 show a composition bias toward pro residues; the sequence is SRPPPPPPPPPPP. A Fe cation-binding site is contributed by histidine 430.

The protein belongs to the gamma-BBH/TMLD family. Requires Fe(2+) as cofactor. L-ascorbate serves as cofactor.

The protein localises to the cytoplasm. It catalyses the reaction N(6),N(6),N(6)-trimethyl-L-lysine + 2-oxoglutarate + O2 = (3S)-3-hydroxy-N(6),N(6),N(6)-trimethyl-L-lysine + succinate + CO2. It functions in the pathway amine and polyamine biosynthesis; carnitine biosynthesis. In terms of biological role, converts trimethyllysine (TML) into hydroxytrimethyllysine (HTML). In Neurospora crassa (strain ATCC 24698 / 74-OR23-1A / CBS 708.71 / DSM 1257 / FGSC 987), this protein is Trimethyllysine dioxygenase (cbs-1).